The following is a 525-amino-acid chain: ATP synthase subunit alpha (525 aa).

169–176 (GDRQTGKT) is an ATP binding site.

The protein belongs to the ATPase alpha/beta chains family. F-type ATPases have 2 components, CF(1) - the catalytic core - and CF(0) - the membrane proton channel. CF(1) has five subunits: alpha(3), beta(3), gamma(1), delta(1), epsilon(1). CF(0) has three main subunits: a(1), b(2) and c(9-12). The alpha and beta chains form an alternating ring which encloses part of the gamma chain. CF(1) is attached to CF(0) by a central stalk formed by the gamma and epsilon chains, while a peripheral stalk is formed by the delta and b chains.

It is found in the cell membrane. The catalysed reaction is ATP + H2O + 4 H(+)(in) = ADP + phosphate + 5 H(+)(out). Its function is as follows. Produces ATP from ADP in the presence of a proton gradient across the membrane. The alpha chain is a regulatory subunit. This chain is ATP synthase subunit alpha, found in Mycoplasma mycoides subsp. mycoides SC (strain CCUG 32753 / NCTC 10114 / PG1).